Reading from the N-terminus, the 780-residue chain is B3 domain-containing transcription repressor VAL2 (780 aa).

Positions 286–387 (FEKVLSASDA…KLVMGYRKAT (102 aa)) form a DNA-binding region, TF-B3. The CW-type zinc-finger motif lies at 515-565 (TGEQEQWVQCDACGKWRQLPVDILLPPKWSCSDNLLDPGRSSCSAPDELSP). Positions 524, 527, 545, and 557 each coordinate Zn(2+). 3 disordered regions span residues 577-608 (EFKR…AGIT), 669-695 (KRNK…TEVE), and 743-780 (NTAG…DPVN). The segment covering 584–603 (ASSNEKLNQSQDASALNSLG) has biased composition (polar residues). Over residues 674–686 (EAGQASQQAQSQS) the composition is skewed to low complexity. Polar residues predominate over residues 743 to 765 (NTAGEQQSSDMVSTEHGSSSAAQ).

The protein localises to the nucleus. In terms of biological role, transcriptional repressor of gene expression involved in embryonic pathways, such as LEC1, ABI3, and FUS3. Repressor of the sugar-inducible genes involved in the seed maturation program in seedlings. Plays an essential role in regulating the transition from seed maturation to seedling growth. Functionally redundant with VAL1/HSI2. The chain is B3 domain-containing transcription repressor VAL2 (VAL2) from Arabidopsis thaliana (Mouse-ear cress).